The sequence spans 127 residues: Fluoride-specific ion channel FluC (127 aa).

Helical transmembrane passes span 4 to 24, 36 to 56, 72 to 92, and 101 to 121; these read LLLV…VGVG, GTFT…SWLA, VGVL…ALMI, and FTYS…GLLV. Residues glycine 76 and threonine 79 each contribute to the Na(+) site.

This sequence belongs to the fluoride channel Fluc/FEX (TC 1.A.43) family.

The protein localises to the cell inner membrane. The catalysed reaction is fluoride(in) = fluoride(out). With respect to regulation, na(+) is not transported, but it plays an essential structural role and its presence is essential for fluoride channel function. Functionally, fluoride-specific ion channel. Important for reducing fluoride concentration in the cell, thus reducing its toxicity. In Caulobacter vibrioides (strain ATCC 19089 / CIP 103742 / CB 15) (Caulobacter crescentus), this protein is Fluoride-specific ion channel FluC.